Reading from the N-terminus, the 126-residue chain is Large ribosomal subunit protein bL12 (126 aa).

It belongs to the bacterial ribosomal protein bL12 family. As to quaternary structure, homodimer. Part of the ribosomal stalk of the 50S ribosomal subunit. Forms a multimeric L10(L12)X complex, where L10 forms an elongated spine to which 2 to 4 L12 dimers bind in a sequential fashion. Binds GTP-bound translation factors.

Functionally, forms part of the ribosomal stalk which helps the ribosome interact with GTP-bound translation factors. Is thus essential for accurate translation. The chain is Large ribosomal subunit protein bL12 from Nocardia farcinica (strain IFM 10152).